Here is a 1234-residue protein sequence, read N- to C-terminus: MRLSARIIWLILWTVCAAEDCKGPPPRENSEILSGSWSEQLYPEGTQATYKCRPGYRTLGTIVKVCKNGKWVASNPSRICRKKPCGHPGDTPFGSFRLAVGSQFEFGAKVVYTCDDGYQLLGEIDYRECGADGWINDIPLCEVVKCLPVTELENGRIVSGAAETDQEYYFGQVVRFECNSGFKIEGHKEIHCSENGLWSNEKPRCVEILCTPPRVENGDGINVKPVYKENERYHYKCKHGYVPKERGDAVCTGSGWSSQPFCEEKRCSPPYILNGIYTPHRIIHRSDDEIRYECNYGFYPVTGSTVSKCTPTGWIPVPRCTLKPCEFPQFKYGRLYYEESLRPNFPVSIGNKYSYKCDNGFSPPSGYSWDYLRCTAQGWEPEVPCVRKCVFHYVENGDSAYWEKVYVQGQSLKVQCYNGYSLQNGQDTMTCTENGWSPPPKCIRIKTCSASDIHIDNGFLSESSSIYALNRETSYRCKQGYVTNTGEISGSITCLQNGWSPQPSCIKSCDMPVFENSITKNTRTWFKLNDKLDYECLVGFENEYKHTKGSITCTYYGWSDTPSCYERECSVPTLDRKLVVSPRKEKYRVGDLLEFSCHSGHRVGPDSVQCYHFGWSPGFPTCKGQVASCAPPLEILNGEINGAKKVEYSHGEVVKYDCKPRFLLKGPNKIQCVDGNWTTLPVCIEEERTCGDIPELEHGSAKCSVPPYHHGDSVEFICEENFTMIGHGSVSCISGKWTQLPKCVATDQLEKCRVLKSTGIEAIKPKLTEFTHNSTMDYKCRDKQEYERSICINGKWDPEPNCTSKTSCPPPPQIPNTQVIETTVKYLDGEKLSVLCQDNYLTQDSEEMVCKDGRWQSLPRCIEKIPCSQPPTIEHGSINLPRSSEERRDSIESSSHEHGTTFSYVCDDGFRIPEENRITCYMGKWSTPPRCVGLPCGPPPSIPLGTVSLELESYQHGEEVTYHCSTGFGIDGPAFIICEGGKWSDPPKCIKTDCDVLPTVKNAIIRGKSKKSYRTGEQVTFRCQSPYQMNGSDTVTCVNSRWIGQPVCKDNSCVDPPHVPNATIVTRTKNKYLHGDRVRYECNKPLELFGQVEVMCENGIWTEKPKCRDSTGKCGPPPPIDNGDITSLSLPVYEPLSSVEYQCQKYYLLKGKKTITCRNGKWSEPPTCLHACVIPENIMESHNIILKWRHTEKIYSHSGEDIEFGCKYGYYKARDSPPFRTKCINGTINYPTCV.

The signal sequence occupies residues 1-18 (MRLSARIIWLILWTVCAA). Sushi domains lie at 19–82 (EDCK…ICRK), 83–143 (KPCG…LCEV), 144–207 (VKCL…RCVE), 208–264 (ILCT…FCEE), 265–322 (KRCS…RCTL), 324–386 (PCEF…VPCV), 387–444 (RKCV…KCIR), 446–507 (KTCS…SCIK), 508–566 (SCDM…SCYE), 567–624 (RECS…TCKG), 627–685 (ASCA…VCIE), 688–745 (RTCG…KCVA), 750–804 (EKCR…NCTS), 806–863 (TSCP…RCIE), 865–933 (IPCS…RCVG), 934–991 (LPCG…KCIK), 992–1050 (TDCD…VCKD), 1051–1109 (NSCV…KCRD), 1112–1170 (GKCG…TCLH), and 1171–1234 (ACVI…PTCV). Disulfide bonds link C21-C66, C52-C80, C85-C129, C114-C141, C146-C192, C178-C205, C210-C251, C237-C262, C267-C309, C294-C320, C325-C374, C357-C385, C389-C431, C416-C442, C448-C494, C477-C505, C509-C553, C536-C564, C569-C610, C597-C622, C629-C672, C658-C683, C690-C732, C718-C743, C752-C791, C780-C802, C808-C850, C836-C861, C867-C920, C906-C931, C936-C978, C964-C989, C994-C1037, C1023-C1048, C1053-C1096, C1082-C1107, C1114-C1157, C1143-C1168, C1172-C1223, and C1206-C1233. N676, N721, N773, and N801 each carry an N-linked (GlcNAc...) asparagine glycan. The interval 872–896 (TIEHGSINLPRSSEERRDSIESSSH) is disordered. Positions 883-896 (SSEERRDSIESSSH) are enriched in basic and acidic residues. 2 N-linked (GlcNAc...) asparagine glycosylation sites follow: N1030 and N1061. S1198 carries the phosphoserine modification. Residue N1225 is glycosylated (N-linked (GlcNAc...) asparagine).

Homodimer. Also forms homooligomers. Interacts with complement protein C3b; this interaction inhibits complement activation. Interacts with complement protein C3d. Interacts with CR3/ITGAM; this interaction mediates adhesion of neutrophils to pathogens leading to pathogen clearance. In terms of processing, sulfated on tyrosine residues. CFH is one of the most abundant complement components in blood where the liver is the major source of CFH protein in vivo. in addition, CFH is secreted by additional cell types including monocytes, fibroblasts, or endothelial cells.

It is found in the secreted. Functionally, glycoprotein that plays an essential role in maintaining a well-balanced immune response by modulating complement activation. Acts as a soluble inhibitor of complement, where its binding to self markers such as glycan structures prevents complement activation and amplification on cell surfaces. Accelerates the decay of the complement alternative pathway (AP) C3 convertase C3bBb, thus preventing local formation of more C3b, the central player of the complement amplification loop. As a cofactor of the serine protease factor I, CFH also regulates proteolytic degradation of already-deposited C3b. In addition, mediates several cellular responses through interaction with specific receptors. For example, interacts with CR3/ITGAM receptor and thereby mediates the adhesion of human neutrophils to different pathogens. In turn, these pathogens are phagocytosed and destroyed. This chain is Complement factor H (Cfh), found in Mus musculus (Mouse).